The sequence spans 1159 residues: Ferroxidase HEPHL1 (1159 aa).

The N-terminal stretch at 1–24 is a signal peptide; that stretch reads MPRKQPAGCIFLLTFLGLSGLVGT. Plastocyanin-like domains lie at 25 to 207, 218 to 366, 379 to 561, 571 to 719, 731 to 907, and 915 to 1092; these read VTRT…LLVC, TRND…VDNC, QRRY…LLVC, TQKG…VSSC, MIRT…LITC, and KGRR…VPSN. Residues 25–1114 are Extracellular-facing; that stretch reads VTRTYYIGIV…KNLGPTGAKA (1090 aa). Cu cation contacts are provided by H127 and H129. Residue N161 is glycosylated (N-linked (GlcNAc...) asparagine). An intrachain disulfide couples C181 to C207. Positions 187 and 189 each coordinate Cu cation. N236 carries N-linked (GlcNAc...) asparagine glycosylation. Cysteines 285 and 366 form a disulfide. Cu cation-binding residues include H304, C347, and H352. An N-linked (GlcNAc...) asparagine glycan is attached at N407. C535 and C561 are disulfide-bonded. The N-linked (GlcNAc...) asparagine glycan is linked to N589. A disulfide bridge links C638 with C719. Residues H657, C700, H705, and M710 each contribute to the Cu cation site. N-linked (GlcNAc...) asparagine glycosylation is present at N772. Cysteines 881 and 907 form a disulfide. N935 is a glycosylation site (N-linked (GlcNAc...) asparagine). The Cu cation site is built by H1003, H1006, H1008, H1048, C1049, H1050, H1054, and M1059. A helical transmembrane segment spans residues 1115-1135; sequence ALVILFIIGLLLLITTVILSL. Over 1136 to 1159 the chain is Cytoplasmic; that stretch reads RLCSAMKQTDYQQVQSCALPTDAL.

Belongs to the multicopper oxidase family. The cofactor is Cu cation.

The protein localises to the membrane. It carries out the reaction 4 Fe(2+) + O2 + 4 H(+) = 4 Fe(3+) + 2 H2O. Is a copper-binding glycoprotein with ferroxidase activity. It oxidizes Fe(2+) to Fe(3+) without releasing radical oxygen species. May be involved in the regulation of intracellular iron content. This chain is Ferroxidase HEPHL1 (HEPHL1), found in Homo sapiens (Human).